The primary structure comprises 228 residues: Sugar fermentation stimulation protein homolog (228 aa).

This sequence belongs to the SfsA family.

This chain is Sugar fermentation stimulation protein homolog, found in Desulfitobacterium hafniense (strain DSM 10664 / DCB-2).